The following is a 151-amino-acid chain: Putative calcium-binding protein CML23 (151 aa).

EF-hand domains follow at residues 2-37 (VASD…SLGE), 39-74 (MPDE…MEAD), 84-119 (ETCR…LGTH), and 120-151 (LDVA…MMMA). Residues Asp-15, Asp-17, Asp-19, Lys-21, Glu-26, Asp-52, Asp-54, Asp-56, and Glu-63 each coordinate Ca(2+). Ca(2+)-binding residues include Asp-133, Asn-135, Asp-137, and Glu-144.

Functionally, potential calcium sensor. The chain is Putative calcium-binding protein CML23 (CML23) from Oryza sativa subsp. japonica (Rice).